Here is a 232-residue protein sequence, read N- to C-terminus: Enolase-phosphatase E1 (232 aa).

This sequence belongs to the HAD-like hydrolase superfamily. MasA/MtnC family. Monomer. Mg(2+) is required as a cofactor.

It carries out the reaction 5-methylsulfanyl-2,3-dioxopentyl phosphate + H2O = 1,2-dihydroxy-5-(methylsulfanyl)pent-1-en-3-one + phosphate. The protein operates within amino-acid biosynthesis; L-methionine biosynthesis via salvage pathway; L-methionine from S-methyl-5-thio-alpha-D-ribose 1-phosphate: step 3/6. It participates in amino-acid biosynthesis; L-methionine biosynthesis via salvage pathway; L-methionine from S-methyl-5-thio-alpha-D-ribose 1-phosphate: step 4/6. Its function is as follows. Bifunctional enzyme that catalyzes the enolization of 2,3-diketo-5-methylthiopentyl-1-phosphate (DK-MTP-1-P) into the intermediate 2-hydroxy-3-keto-5-methylthiopentenyl-1-phosphate (HK-MTPenyl-1-P), which is then dephosphorylated to form the acireductone 1,2-dihydroxy-3-keto-5-methylthiopentene (DHK-MTPene). This is Enolase-phosphatase E1 from Xanthomonas euvesicatoria pv. vesicatoria (strain 85-10) (Xanthomonas campestris pv. vesicatoria).